The chain runs to 462 residues: Ketoisovalerate reductase (462 aa).

The segment at 34 to 55 (PTAVKPDRADRGDFDPGKYPVD) is disordered. The span at 38–49 (KPDRADRGDFDP) shows a compositional bias: basic and acidic residues. 72–77 (GPGNVG) is a binding site for NADP(+). Residues 167 to 184 (ADRLRRYLGRCSSVVFAQ) carry the Calmoduling-binding motif. The active-site Proton donor is the K290. Positions 294, 298, and 403 each coordinate substrate. E415 contributes to the NADP(+) binding site.

The protein belongs to the ketopantoate reductase family. As to quaternary structure, homodimer. Binds to calmodulin in a calcium-independent manner.

It carries out the reaction (R)-2-hydroxy-3-methylbutanoate + NADP(+) = 3-methyl-2-oxobutanoate + NADPH + H(+). With respect to regulation, environmental stimuli such as light and salt stress suppress activity through stimulation of calmodulin (CaM) that binds BEA2 and probably impairs its dimerization. Its function is as follows. Ketoisovalerate reductase; part of the gene cluster that mediates the biosynthesis of beauvericin (BEA), a non-ribosomal cyclic hexadepsipeptide that shows antibiotic, antifungal, insecticidal, and cancer cell antiproliferative and antihaptotactic activity. Ketoisovalerate reductase BEA2 catalyzes the NADPH-specific reduction of ketoisovaleric acid to hydroxyisovalerate, a precursor for beauvericin biosynthesis. The nonribosomal cyclodepsipeptide synthetase BEA1 then catalyzes the formation of beauvericin via condensation and cyclization of 3 dipeptidol monomers, each composed of one unit of hydroxyisovalerate and one unit of N-methyl-phenylalanine. This is Ketoisovalerate reductase from Beauveria bassiana (White muscardine disease fungus).